Reading from the N-terminus, the 128-residue chain is Aspartate 1-decarboxylase (128 aa).

Ser-25 functions as the Schiff-base intermediate with substrate; via pyruvic acid in the catalytic mechanism. Ser-25 bears the Pyruvic acid (Ser) mark. Residue Thr-57 coordinates substrate. The active-site Proton donor is Tyr-58. Residue 73-75 (GSA) participates in substrate binding.

The protein belongs to the PanD family. In terms of assembly, heterooctamer of four alpha and four beta subunits. The cofactor is pyruvate. Is synthesized initially as an inactive proenzyme, which is activated by self-cleavage at a specific serine bond to produce a beta-subunit with a hydroxyl group at its C-terminus and an alpha-subunit with a pyruvoyl group at its N-terminus.

Its subcellular location is the cytoplasm. It catalyses the reaction L-aspartate + H(+) = beta-alanine + CO2. It functions in the pathway cofactor biosynthesis; (R)-pantothenate biosynthesis; beta-alanine from L-aspartate: step 1/1. Its function is as follows. Catalyzes the pyruvoyl-dependent decarboxylation of aspartate to produce beta-alanine. The protein is Aspartate 1-decarboxylase of Burkholderia thailandensis (strain ATCC 700388 / DSM 13276 / CCUG 48851 / CIP 106301 / E264).